Here is a 427-residue protein sequence, read N- to C-terminus: UPF0415 protein C7orf25 homolog (427 aa).

The segment covering 200–234 (GGEEEDEEDQEGDHEDLVEEEEDGEDDNDDDSDDT) has biased composition (acidic residues). Residues 200–236 (GGEEEDEEDQEGDHEDLVEEEEDGEDDNDDDSDDTDL) form a disordered region.

It belongs to the UPF0415 family.

The chain is UPF0415 protein C7orf25 homolog from Danio rerio (Zebrafish).